A 129-amino-acid polypeptide reads, in one-letter code: Small ribosomal subunit protein uS11 (129 aa).

Belongs to the universal ribosomal protein uS11 family. Part of the 30S ribosomal subunit. Interacts with proteins S7 and S18. Binds to IF-3.

In terms of biological role, located on the platform of the 30S subunit, it bridges several disparate RNA helices of the 16S rRNA. Forms part of the Shine-Dalgarno cleft in the 70S ribosome. The sequence is that of Small ribosomal subunit protein uS11 from Buchnera aphidicola subsp. Baizongia pistaciae (strain Bp).